A 108-amino-acid chain; its full sequence is Pyrimidine/purine nucleoside phosphorylase (108 aa).

The protein belongs to the nucleoside phosphorylase PpnP family.

The catalysed reaction is a purine D-ribonucleoside + phosphate = a purine nucleobase + alpha-D-ribose 1-phosphate. It carries out the reaction adenosine + phosphate = alpha-D-ribose 1-phosphate + adenine. It catalyses the reaction cytidine + phosphate = cytosine + alpha-D-ribose 1-phosphate. The enzyme catalyses guanosine + phosphate = alpha-D-ribose 1-phosphate + guanine. The catalysed reaction is inosine + phosphate = alpha-D-ribose 1-phosphate + hypoxanthine. It carries out the reaction thymidine + phosphate = 2-deoxy-alpha-D-ribose 1-phosphate + thymine. It catalyses the reaction uridine + phosphate = alpha-D-ribose 1-phosphate + uracil. The enzyme catalyses xanthosine + phosphate = alpha-D-ribose 1-phosphate + xanthine. Its function is as follows. Catalyzes the phosphorolysis of diverse nucleosides, yielding D-ribose 1-phosphate and the respective free bases. Can use uridine, adenosine, guanosine, cytidine, thymidine, inosine and xanthosine as substrates. Also catalyzes the reverse reactions. The sequence is that of Pyrimidine/purine nucleoside phosphorylase from Polaromonas naphthalenivorans (strain CJ2).